A 258-amino-acid polypeptide reads, in one-letter code: Tryptophan synthase alpha chain (258 aa).

Residues glutamate 52 and aspartate 63 each act as proton acceptor in the active site.

It belongs to the TrpA family. Tetramer of two alpha and two beta chains.

The enzyme catalyses (1S,2R)-1-C-(indol-3-yl)glycerol 3-phosphate + L-serine = D-glyceraldehyde 3-phosphate + L-tryptophan + H2O. It participates in amino-acid biosynthesis; L-tryptophan biosynthesis; L-tryptophan from chorismate: step 5/5. In terms of biological role, the alpha subunit is responsible for the aldol cleavage of indoleglycerol phosphate to indole and glyceraldehyde 3-phosphate. The polypeptide is Tryptophan synthase alpha chain (Streptococcus pneumoniae serotype 19F (strain G54)).